We begin with the raw amino-acid sequence, 899 residues long: Translation initiation factor IF-2 (899 aa).

Disordered regions lie at residues 65-84 (KTRSTLNVPSTGGKSKSVQI) and 91-310 (TYVK…SFNK). Polar residues predominate over residues 68 to 82 (STLNVPSTGGKSKSV). Residues 108 to 164 (QARREAEEQAQRAAEEQAKREAELREAAEKAKRAADEQAKREAAEKAKRDVAEKEKV) are compositionally biased toward basic and acidic residues. The span at 165–174 (TNQQNENMTK) shows a compositional bias: polar residues. Over residues 177–236 (QAEKAKREAEAAELKRKAEEAARLKVEEEARRIAEEARRMAEENAGRWEAESAKPEESAD) the composition is skewed to basic and acidic residues. Residues 262–276 (SRSRAGKVTKQKKGN) show a composition bias toward basic residues. Positions 277 to 290 (RQSESKADREEARA) are enriched in basic and acidic residues. Residues 398 to 567 (ARAPVVTIMG…LLQAEVLELK (170 aa)) form the tr-type G domain. The G1 stretch occupies residues 407-414 (GHVDHGKT). Residue 407–414 (GHVDHGKT) coordinates GTP. Residues 432 to 436 (GITQH) form a G2 region. The G3 stretch occupies residues 453–456 (DTPG). Residues 453 to 457 (DTPGH) and 507 to 510 (NKID) contribute to the GTP site. The tract at residues 507 to 510 (NKID) is G4. Positions 543 to 545 (SAK) are G5.

Belongs to the TRAFAC class translation factor GTPase superfamily. Classic translation factor GTPase family. IF-2 subfamily.

Its subcellular location is the cytoplasm. Its function is as follows. One of the essential components for the initiation of protein synthesis. Protects formylmethionyl-tRNA from spontaneous hydrolysis and promotes its binding to the 30S ribosomal subunits. Also involved in the hydrolysis of GTP during the formation of the 70S ribosomal complex. This Pectobacterium carotovorum subsp. carotovorum (strain PC1) protein is Translation initiation factor IF-2.